The sequence spans 436 residues: UDP-N-acetylmuramate--L-alanine ligase (436 aa).

Position 108–114 (108–114 (GAHGKTS)) interacts with ATP.

The protein belongs to the MurCDEF family.

The protein resides in the cytoplasm. The enzyme catalyses UDP-N-acetyl-alpha-D-muramate + L-alanine + ATP = UDP-N-acetyl-alpha-D-muramoyl-L-alanine + ADP + phosphate + H(+). The protein operates within cell wall biogenesis; peptidoglycan biosynthesis. Its function is as follows. Cell wall formation. The polypeptide is UDP-N-acetylmuramate--L-alanine ligase (Bacillus cereus (strain Q1)).